The following is a 409-amino-acid chain: Multifunctional CCA protein (409 aa).

Positions 8 and 11 each coordinate ATP. Glycine 8 and arginine 11 together coordinate CTP. Residues aspartate 21 and aspartate 23 each coordinate Mg(2+). Arginine 91, arginine 137, and arginine 140 together coordinate ATP. CTP-binding residues include arginine 91, arginine 137, and arginine 140. The region spanning 228 to 329 is the HD domain; sequence TGAHTLSVLL…LELLQSFDVF (102 aa).

It belongs to the tRNA nucleotidyltransferase/poly(A) polymerase family. Bacterial CCA-adding enzyme type 1 subfamily. Monomer. Can also form homodimers and oligomers. It depends on Mg(2+) as a cofactor. Ni(2+) serves as cofactor.

The enzyme catalyses a tRNA precursor + 2 CTP + ATP = a tRNA with a 3' CCA end + 3 diphosphate. It carries out the reaction a tRNA with a 3' CCA end + 2 CTP + ATP = a tRNA with a 3' CCACCA end + 3 diphosphate. Its function is as follows. Catalyzes the addition and repair of the essential 3'-terminal CCA sequence in tRNAs without using a nucleic acid template. Adds these three nucleotides in the order of C, C, and A to the tRNA nucleotide-73, using CTP and ATP as substrates and producing inorganic pyrophosphate. tRNA 3'-terminal CCA addition is required both for tRNA processing and repair. Also involved in tRNA surveillance by mediating tandem CCA addition to generate a CCACCA at the 3' terminus of unstable tRNAs. While stable tRNAs receive only 3'-terminal CCA, unstable tRNAs are marked with CCACCA and rapidly degraded. The sequence is that of Multifunctional CCA protein from Pseudomonas fluorescens (strain ATCC BAA-477 / NRRL B-23932 / Pf-5).